A 659-amino-acid polypeptide reads, in one-letter code: Chaperone protein DnaK (659 aa).

At Thr-201 the chain carries Phosphothreonine; by autocatalysis. Residues 571 to 592 show a composition bias toward basic and acidic residues; that stretch reads RSALKEDAPTEKIKEASDELSR. The segment at 571 to 659 is disordered; that stretch reads RSALKEDAPT…DVEIVDKPND (89 aa). Residues 600–613 are compositionally biased toward low complexity; that stretch reads AMQSQSASAAANAQ.

This sequence belongs to the heat shock protein 70 family.

Acts as a chaperone. This is Chaperone protein DnaK from Chlamydia abortus (strain DSM 27085 / S26/3) (Chlamydophila abortus).